A 365-amino-acid chain; its full sequence is Chorismate synthase (365 aa).

Residue Arg-48 participates in NADP(+) binding. Residues Arg-125–Ser-127, Asn-238–Ala-239, Gly-278, Lys-293–Ser-297, and Arg-319 contribute to the FMN site.

This sequence belongs to the chorismate synthase family. Homotetramer. The cofactor is FMNH2.

It carries out the reaction 5-O-(1-carboxyvinyl)-3-phosphoshikimate = chorismate + phosphate. It participates in metabolic intermediate biosynthesis; chorismate biosynthesis; chorismate from D-erythrose 4-phosphate and phosphoenolpyruvate: step 7/7. Its function is as follows. Catalyzes the anti-1,4-elimination of the C-3 phosphate and the C-6 proR hydrogen from 5-enolpyruvylshikimate-3-phosphate (EPSP) to yield chorismate, which is the branch point compound that serves as the starting substrate for the three terminal pathways of aromatic amino acid biosynthesis. This reaction introduces a second double bond into the aromatic ring system. This is Chorismate synthase from Marinomonas sp. (strain MWYL1).